A 317-amino-acid chain; its full sequence is Curved DNA-binding protein (317 aa).

The region spanning Asp5–Arg69 is the J domain.

Its subcellular location is the cytoplasm. It localises to the nucleoid. DNA-binding protein that preferentially recognizes a curved DNA sequence. It is probably a functional analog of DnaJ; displays overlapping activities with DnaJ, but functions under different conditions, probably acting as a molecular chaperone in an adaptive response to environmental stresses other than heat shock. Lacks autonomous chaperone activity; binds native substrates and targets them for recognition by DnaK. Its activity is inhibited by the binding of CbpM. The polypeptide is Curved DNA-binding protein (Pseudomonas putida (strain W619)).